A 152-amino-acid chain; its full sequence is Xanthine-guanine phosphoribosyltransferase (152 aa).

Residues 37-38 (RG) and 88-96 (DDLVDTGNT) contribute to the 5-phospho-alpha-D-ribose 1-diphosphate site. D89 contributes to the Mg(2+) binding site. Guanine-binding residues include D92 and I135. The xanthine site is built by D92 and I135. GMP is bound by residues 92–96 (DTGNT) and 134–135 (WI).

Belongs to the purine/pyrimidine phosphoribosyltransferase family. XGPT subfamily. In terms of assembly, homotetramer. Requires Mg(2+) as cofactor.

It is found in the cell inner membrane. It carries out the reaction GMP + diphosphate = guanine + 5-phospho-alpha-D-ribose 1-diphosphate. It catalyses the reaction XMP + diphosphate = xanthine + 5-phospho-alpha-D-ribose 1-diphosphate. The catalysed reaction is IMP + diphosphate = hypoxanthine + 5-phospho-alpha-D-ribose 1-diphosphate. It participates in purine metabolism; GMP biosynthesis via salvage pathway; GMP from guanine: step 1/1. It functions in the pathway purine metabolism; XMP biosynthesis via salvage pathway; XMP from xanthine: step 1/1. Its function is as follows. Purine salvage pathway enzyme that catalyzes the transfer of the ribosyl-5-phosphate group from 5-phospho-alpha-D-ribose 1-diphosphate (PRPP) to the N9 position of the 6-oxopurines guanine and xanthine to form the corresponding ribonucleotides GMP (guanosine 5'-monophosphate) and XMP (xanthosine 5'-monophosphate), with the release of PPi. To a lesser extent, also acts on hypoxanthine. This is Xanthine-guanine phosphoribosyltransferase from Actinobacillus succinogenes (strain ATCC 55618 / DSM 22257 / CCUG 43843 / 130Z).